Reading from the N-terminus, the 64-residue chain is Enteric beta-defensin (64 aa).

Positions 1-26 (MRLHHLLLTLLFLVLSAGSGFTQGIS) are cleaved as a signal peptide. 3 disulfides stabilise this stretch: Cys31–Cys60, Cys38–Cys53, and Cys43–Cys61.

This sequence belongs to the beta-defensin family. LAP/TAP subfamily. As to expression, inducibly expressed in enteric epithelial cells.

The protein localises to the secreted. Has antibacterial activity. The sequence is that of Enteric beta-defensin (EBD) from Bos taurus (Bovine).